The following is a 337-amino-acid chain: Anthranilate phosphoribosyltransferase (337 aa).

5-phospho-alpha-D-ribose 1-diphosphate-binding positions include G81, G84–D85, S89, N91–T94, K109–S117, and A121. G81 contacts anthranilate. S93 contacts Mg(2+). Residue N112 participates in anthranilate binding. Anthranilate is bound at residue R167. 2 residues coordinate Mg(2+): D226 and E227.

It belongs to the anthranilate phosphoribosyltransferase family. As to quaternary structure, homodimer. Requires Mg(2+) as cofactor.

The catalysed reaction is N-(5-phospho-beta-D-ribosyl)anthranilate + diphosphate = 5-phospho-alpha-D-ribose 1-diphosphate + anthranilate. The protein operates within amino-acid biosynthesis; L-tryptophan biosynthesis; L-tryptophan from chorismate: step 2/5. Functionally, catalyzes the transfer of the phosphoribosyl group of 5-phosphorylribose-1-pyrophosphate (PRPP) to anthranilate to yield N-(5'-phosphoribosyl)-anthranilate (PRA). The chain is Anthranilate phosphoribosyltransferase from Methylorubrum extorquens (strain CM4 / NCIMB 13688) (Methylobacterium extorquens).